Here is a 343-residue protein sequence, read N- to C-terminus: Glucan endo-1,3-beta-glucosidase, acidic isoform GI9 (343 aa).

A signal peptide spans 1–29 (MTLCIKNGFLAAALVLVGLLICSIQMIGA). Gln30 bears the Pyrrolidone carboxylic acid mark. The active-site Proton donor is the Glu124. Catalysis depends on Glu264, which acts as the Nucleophile.

It belongs to the glycosyl hydrolase 17 family.

The protein resides in the secreted. Its subcellular location is the extracellular space. It carries out the reaction Hydrolysis of (1-&gt;3)-beta-D-glucosidic linkages in (1-&gt;3)-beta-D-glucans.. Its function is as follows. Implicated in the defense of plants against pathogens. This chain is Glucan endo-1,3-beta-glucosidase, acidic isoform GI9 (PR2), found in Nicotiana tabacum (Common tobacco).